The sequence spans 508 residues: Mitochondrial distribution and morphology protein 10 (508 aa).

Residues 160–195 (PAHPTSTRPTPPQTPPSHTRQPSEPSTPAPSPTPGN) form a disordered region.

The protein belongs to the MDM10 family. As to quaternary structure, component of the ER-mitochondria encounter structure (ERMES) or MDM complex, composed of MMM1, MDM10, MDM12 and MDM34. Associates with the mitochondrial outer membrane sorting assembly machinery SAM(core) complex.

It is found in the mitochondrion outer membrane. In terms of biological role, component of the ERMES/MDM complex, which serves as a molecular tether to connect the endoplasmic reticulum and mitochondria. Components of this complex are involved in the control of mitochondrial shape and protein biogenesis and may function in phospholipid exchange. MDM10 is involved in the late assembly steps of the general translocase of the mitochondrial outer membrane (TOM complex). Functions in the TOM40-specific route of the assembly of outer membrane beta-barrel proteins, including the association of TOM40 with the receptor TOM22 and small TOM proteins. Can associate with the SAM(core) complex as well as the MDM12-MMM1 complex, both involved in late steps of the major beta-barrel assembly pathway, that is responsible for biogenesis of all outer membrane beta-barrel proteins. May act as a switch that shuttles between both complexes and channels precursor proteins into the TOM40-specific pathway. Plays a role in mitochondrial morphology and in the inheritance of mitochondria. In Cryptococcus neoformans var. neoformans serotype D (strain JEC21 / ATCC MYA-565) (Filobasidiella neoformans), this protein is Mitochondrial distribution and morphology protein 10.